The following is a 132-amino-acid chain: Large ribosomal subunit protein uL14 (132 aa).

Belongs to the universal ribosomal protein uL14 family. In terms of assembly, part of the 50S ribosomal subunit. Forms a cluster with proteins L3 and L24e, part of which may contact the 16S rRNA in 2 intersubunit bridges.

In terms of biological role, binds to 23S rRNA. Forms part of two intersubunit bridges in the 70S ribosome. The polypeptide is Large ribosomal subunit protein uL14 (Thermoplasma volcanium (strain ATCC 51530 / DSM 4299 / JCM 9571 / NBRC 15438 / GSS1)).